The chain runs to 144 residues: Succinate dehydrogenase cytochrome b560 subunit (144 aa).

3 consecutive transmembrane segments (helical) span residues 40 to 60, 84 to 104, and 124 to 144; these read IFHR…ILIL, GFLF…HLFA, and LTGY…WIIF. Histidine 101 is a binding site for heme.

The protein belongs to the cytochrome b560 family. In terms of assembly, forms part of complex II containing four subunits: a 70 kDa flavoprotein (FP), a 27 kDa iron-sulfur protein (IP), a cytochrome B and a membrane-anchoring protein. It depends on heme as a cofactor.

It is found in the mitochondrion inner membrane. The protein operates within carbohydrate metabolism; tricarboxylic acid cycle. Functionally, membrane-anchoring subunit of succinate dehydrogenase (SDH) that is involved in complex II of the mitochondrial electron transport chain and is responsible for transferring electrons from succinate to ubiquinone (coenzyme Q). This is Succinate dehydrogenase cytochrome b560 subunit (SDH3) from Reclinomonas americana.